The primary structure comprises 374 residues: DNA integrity scanning protein DisA (374 aa).

The DAC domain maps to 20 to 158; it reads DGLMRASLSA…DGMRRVLEDS (139 aa). ATP is bound by residues Gly-87, Leu-105, and 118 to 122; that span reads TRHRT.

It belongs to the DisA family. As to quaternary structure, homooctamer. Mg(2+) serves as cofactor.

The enzyme catalyses 2 ATP = 3',3'-c-di-AMP + 2 diphosphate. Participates in a DNA-damage check-point that is active prior to asymmetric division when DNA is damaged. DisA forms globular foci that rapidly scan along the chromosomes during sporulation, searching for lesions. When a lesion is present, DisA pauses at the lesion site. This triggers a cellular response that culminates in a temporary block in sporulation initiation. Functionally, also has diadenylate cyclase activity, catalyzing the condensation of 2 ATP molecules into cyclic di-AMP (c-di-AMP). c-di-AMP acts as a signaling molecule that couples DNA integrity with progression of sporulation. The rise in c-di-AMP level generated by DisA while scanning the chromosome, operates as a positive signal that advances sporulation; upon encountering a lesion, the DisA focus arrests at the damaged site and halts c-di-AMP synthesis. The protein is DNA integrity scanning protein DisA of Streptomyces avermitilis (strain ATCC 31267 / DSM 46492 / JCM 5070 / NBRC 14893 / NCIMB 12804 / NRRL 8165 / MA-4680).